The following is a 575-amino-acid chain: Cyclic nucleotide-gated channel alpha-4 (575 aa).

Residues 1-38 (MSQDSKVKTTESTPPAPTKARKWLPVLDPSGDYYYWWL) lie on the Cytoplasmic side of the membrane. A helical transmembrane segment spans residues 39–60 (NTMVFPIMYNLIIVVCRACFPD). The Extracellular segment spans residues 61-70 (LQHSYLVAWF). Residues 71-91 (VLDYTSDLLYLLDIGVRFHTG) form a helical membrane-spanning segment. At 92 to 116 (FLEQGILVVDKSMIASRYVRTWSFL) the chain is on the cytoplasmic side. Residues 117 to 135 (LDLASLVPTDAAYVQLGPH) traverse the membrane as a helical segment. Topologically, residues 136-140 (IPTLR) are extracellular. The chain crosses the membrane as a helical span at residues 141–159 (LNRFLRVPRLFEAFDRTET). Residues 160-166 (RTAYPNA) are Cytoplasmic-facing. An ion conduction pathway region spans residues 164-272 (PNAFRIAKLM…GSMSSVIYNM (109 aa)). The helical transmembrane segment at 167–190 (FRIAKLMIYIFVVIHWNSCLYFAL) threads the bilayer. At 191–213 (SRYLGFGRDAWVYPDPAQPGFER) the chain is on the extracellular side. Helical transmembrane passes span 214-248 (LRRQYLYSFYFSTLILTTVGDTPLPAREEEYLFMV) and 249-273 (GDFLLAVMGFATIMGSMSSVIYNMN). Positions 231–234 (TVGD) are selectivity filter. The tract at residues 274-350 (TADAAFYPDH…STLSRVQIFQ (77 aa)) is C-linker. Over 274–575 (TADAAFYPDH…AGQEGPSGLE (302 aa)) the chain is Cytoplasmic. An IQ-type motif is present at residues 292–302 (LQHVNRRLERR). 348–471 (IFQNCEASLL…AVMEEKGREI (124 aa)) is a binding site for a nucleoside 3',5'-cyclic phosphate. The cyclic nucleotide-binding domain stretch occupies residues 354–474 (ASLLEELVLK…EEKGREILLK (121 aa)). 3',5'-cyclic GMP is bound by residues Gly414, Ser417, Arg430, and Thr431. 2 residues coordinate 3',5'-cyclic AMP: Arg430 and Thr431. Positions 493 to 547 (TESRLKGLDQQLDDLQTKFARLLAELESSALKIAYRIERLEWQTREWPMPDDMGE) form a coiled coil. The segment at 536–575 (TREWPMPDDMGEADDEAEPGEGTSKDGEEKAGQEGPSGLE) is disordered. Acidic residues predominate over residues 544–554 (DMGEADDEAEP). Basic and acidic residues predominate over residues 558–567 (TSKDGEEKAG).

It belongs to the cyclic nucleotide-gated cation channel (TC 1.A.1.5) family. CNGA4 subfamily. As to quaternary structure, the olfactory cyclic nucleotide-gated channel is an heterotetramer composed of CNGA2, CNGA4 and CNGB1b subunits with 2:1:1 stoichiometry. In terms of tissue distribution, expressed in the olfactory epithelium.

It localises to the cell projection. The protein resides in the cilium membrane. It catalyses the reaction Ca(2+)(in) = Ca(2+)(out). The catalysed reaction is Na(+)(in) = Na(+)(out). It carries out the reaction K(+)(in) = K(+)(out). The enzyme catalyses NH4(+)(in) = NH4(+)(out). It catalyses the reaction Rb(+)(in) = Rb(+)(out). The catalysed reaction is Li(+)(in) = Li(+)(out). It carries out the reaction Cs(+)(in) = Cs(+)(out). Ca(2+)-calmodulin exerts its inhibitory effect in cAMP sensitivity by binding to IQ-like motif of CNGA4 and preferably binds to the channel in the closed state. Inhibition by PIP3 of the CNG channel probably occurs via CGNA2 binding. Pore-forming subunit of the olfactory cyclic nucleotide-gated channel. Operates in the cilia of olfactory sensory neurons where chemical stimulation of the odorant is converted to an electrical signal. Mediates odorant-induced cAMP-dependent Ca(2+) influx triggering neuron depolarization. The rise of intracellular Ca(2+) levels potentiates the olfactory response by activating Ca(2+)-dependent Cl(-) channels, but it also serves as a negative feedback signal to desensitize the channel for rapid adaptation to odorants. Conducts cGMP- and cAMP-gated ion currents, with permeability for monovalent and divalent cations. Conducts cAMP- and cGMP-gated ion currents, with permeability for monovalent and divalent cations. May conduct nitric oxide-gated Ca(2+) currents relevant to neurons of vomeronasal organ, a system involved in the perception of pheromones. This Mus musculus (Mouse) protein is Cyclic nucleotide-gated channel alpha-4.